The following is a 205-amino-acid chain: Holliday junction branch migration complex subunit RuvA (205 aa).

A domain I region spans residues 1–65; sequence MIAKLKGILD…EDRIHLFGFL (65 aa). The interval 66-144 is domain II; the sequence is DNTEKVAFNM…NINTIANNTS (79 aa). Residues 145 to 153 form a flexible linker region; it reads LATLSTDSN. The tract at residues 154–205 is domain III; the sequence is THDNILSDAITALIALGISRAEATQILSDIYALSPSISVNELVRTALQRRAK.

This sequence belongs to the RuvA family. In terms of assembly, homotetramer. Forms an RuvA(8)-RuvB(12)-Holliday junction (HJ) complex. HJ DNA is sandwiched between 2 RuvA tetramers; dsDNA enters through RuvA and exits via RuvB. An RuvB hexamer assembles on each DNA strand where it exits the tetramer. Each RuvB hexamer is contacted by two RuvA subunits (via domain III) on 2 adjacent RuvB subunits; this complex drives branch migration. In the full resolvosome a probable DNA-RuvA(4)-RuvB(12)-RuvC(2) complex forms which resolves the HJ.

It localises to the cytoplasm. Its function is as follows. The RuvA-RuvB-RuvC complex processes Holliday junction (HJ) DNA during genetic recombination and DNA repair, while the RuvA-RuvB complex plays an important role in the rescue of blocked DNA replication forks via replication fork reversal (RFR). RuvA specifically binds to HJ cruciform DNA, conferring on it an open structure. The RuvB hexamer acts as an ATP-dependent pump, pulling dsDNA into and through the RuvAB complex. HJ branch migration allows RuvC to scan DNA until it finds its consensus sequence, where it cleaves and resolves the cruciform DNA. The polypeptide is Holliday junction branch migration complex subunit RuvA (Orientia tsutsugamushi (strain Ikeda) (Rickettsia tsutsugamushi)).